Here is a 247-residue protein sequence, read N- to C-terminus: V-type proton ATPase subunit D (247 aa).

It belongs to the V-ATPase D subunit family. In terms of assembly, V-ATPase is a heteromultimeric enzyme made up of two complexes: the ATP-hydrolytic V1 complex and the proton translocation V0 complex. The V1 complex consists of three catalytic AB heterodimers that form a heterohexamer, three peripheral stalks each consisting of EG heterodimers, one central rotor including subunits D and F, and the regulatory subunits C and H. The proton translocation complex V0 consists of the proton transport subunit a, a ring of proteolipid subunits c9c'', rotary subunit d, subunits e and f, and the accessory subunits ATP6AP1/Ac45 and ATP6AP2/PRR. Interacts with SNX10.

Its subcellular location is the membrane. It localises to the cytoplasmic vesicle. It is found in the clathrin-coated vesicle membrane. The protein localises to the cytoplasm. The protein resides in the cytoskeleton. Its subcellular location is the microtubule organizing center. It localises to the centrosome. It is found in the cell projection. The protein localises to the cilium. Its function is as follows. Subunit of the V1 complex of vacuolar(H+)-ATPase (V-ATPase), a multisubunit enzyme composed of a peripheral complex (V1) that hydrolyzes ATP and a membrane integral complex (V0) that translocates protons. V-ATPase is responsible for acidifying and maintaining the pH of intracellular compartments and in some cell types, is targeted to the plasma membrane, where it is responsible for acidifying the extracellular environment. May play a role in cilium biogenesis through regulation of the transport and the localization of proteins to the cilium. The sequence is that of V-type proton ATPase subunit D (Atp6v1d) from Mus musculus (Mouse).